The sequence spans 669 residues: Potassium voltage-gated channel subfamily KQT member 1 (669 aa).

The Cytoplasmic portion of the chain corresponds to Met1 to Trp120. At Ser27 the chain carries Phosphoserine; by PKA. Residues Lys121–Leu142 traverse the membrane as a helical segment. At Ser143 to Thr153 the chain is on the extracellular side. A helical transmembrane segment spans residues Gly154–Trp176. Residues Ser177–Arg192 are Cytoplasmic-facing. The chain crosses the membrane as a helical span at residues Phe193–Lys218. At Gly219–Ala226 the chain is on the extracellular side. The helical; Voltage-sensor transmembrane segment at Ile227–Asp242 threads the bilayer. Positions Met238 to Gly246 are interaction with KCNE3. The Cytoplasmic portion of the chain corresponds to Arg243–Gln260. Gln244 serves as a coordination point for a 1,2-diacyl-sn-glycero-3-phospho-(1D-myo-inositol-4,5-bisphosphate). The chain crosses the membrane as a helical span at residues Glu261–Ala283. Residues Glu284 to Tyr299 are Extracellular-facing. Asn289 carries N-linked (GlcNAc...) asparagine glycosylation. Residues Ala300–Pro320 constitute an intramembrane region (pore-forming). The Extracellular segment spans residues Gln321 to Thr322. The chain crosses the membrane as a helical span at residues Trp323–Gly348. Residues Ser349 to Ser669 lie on the Cytoplasmic side of the membrane. The interval Ala370–Tyr382 is interaction with CALM. Ser407 and Ser409 each carry phosphoserine. Positions Lys515–Phe529 are interaction with CALM; calcium-dependent. Positions Pro535 to Leu572 are interaction with KCNE1 C-terminus. Positions Ser585–Gln621 form a coiled coil. Positions Ile588 to Leu616 are interaction with AKAP9. The interval Gly589–Gln620 is C-terminal assembly domain (tetramerization).

It belongs to the potassium channel family. KQT (TC 1.A.1.15) subfamily. Kv7.1/KCNQ1 sub-subfamily. In terms of assembly, tetramer. Heterotetramer with KCNE1; targets to the membrane raft. Interacts (via C-terminus) with CALM; forms a heterooctameric structure (with 4:4 KCNQ1:CALM stoichiometry) in a calcium-independent manner. Interacts with AKAP9; targets protein kinase A (PKA) catalytic and regulatory subunits and protein phosphatase 1 (PP1) to the KCNQ1-KCNE1 complex, allowing PKA-mediated phosphorylation and increase of delayed rectifier potassium channel activity. Interacts with KCNE2; form a heterooligomer complex that targets to the membrane raft and leading to currents with an apparently instantaneous activation, a rapid deactivation process and a linear current-voltage relationship and decreases the amplitude of the outward current. Interacts with AP2M1; mediates estrogen-induced internalization via clathrin-coated vesicles. Interacts with NEDD4L; promotes internalization and decreases I(Ks) currents. Interacts with USP2; counteracts the NEDD4L-specific down-regulation of I(Ks) and restore plasma membrane localization. Heterotetramer with KCNQ5; has a voltage-gated potassium channel activity. Interacts with KCNE3; produces a current with nearly instantaneous activation with a linear current-voltage relationship and alters membrane raft localization. Interacts with KCNE4; impairs KCNQ1 localization in lipid rafts and inhibits voltage-gated potassium channel activity. Interacts with KCNE5; impairs KCNQ1 localization in lipid rafts and only conducts current upon strong and continued depolarization. Interacts with SLC5A3; forms coregulatory channel-transporter complexes that modulate Na(+)-coupled myo-inositol influx through the transporter. Post-translationally, phosphorylation at Ser-27 by PKA; increases delayed rectifier potassium channel activity of the KCNQ1-KCNE1 complex through a macromolecular complex that includes PKA, PP1, and the targeting protein AKAP9. In terms of processing, ubiquitinated by NEDD4L; promotes internalization. The ubiquitinylated form is internalized through a clathrin-mediated endocytosis by interacting with AP2M1 and is recycled back to the cell membrane via RAB4A and RAB11A. Deubiquitinated by USP2; counteracts the NEDD4L-specific down-regulation of I(Ks) and restores the membrane localization.

The protein resides in the cell membrane. It is found in the cytoplasmic vesicle membrane. The protein localises to the early endosome. It localises to the membrane raft. Its subcellular location is the endoplasmic reticulum. The protein resides in the basolateral cell membrane. It is found in the apical cell membrane. The enzyme catalyses K(+)(in) = K(+)(out). PIP2 molecule is essential to activate KCNQ channels by inducing the coupling of the voltage-sensing domain (VSD) and the pore-forming domain (PD). Upon channel activation, PIP2 disrupts the VSD-calmodulin/CALM interactions, causing the release of CALM from the VSD which triggers the opening of the gate. Calcium potentiates KCNQ1 channel current through calcium-bound CALM. Calcium-bound CALM competes with PIP2 to stabilize the channel open state. Its function is as follows. Pore-forming subunit of the voltage-gated potassium (Kv) channel involved in the regulation of cardiomyocyte excitability and important in normal development and functions of myocardium, inner ear, stomach and colon. Associates with KCNE beta subunits that modulates current kinetics. Induces a voltage-dependent by rapidly activating and slowly deactivating potassium-selective outward current. Also promotes a delayed voltage activated potassium current showing outward rectification characteristic. During beta-adrenergic receptor stimulation participates in cardiac repolarization by associating with KCNE1 to form the I(Ks) cardiac potassium current that increases the amplitude and slows down the activation kinetics of outward potassium current I(Ks). Muscarinic agonist oxotremorine-M strongly suppresses KCNQ1/KCNE1 current. When associated with KCNE3, forms the potassium channel that is important for cyclic AMP-stimulated intestinal secretion of chloride ions. This interaction with KCNE3 is reduced by 17beta-estradiol, resulting in the reduction of currents. During conditions of increased substrate load, maintains the driving force for proximal tubular and intestinal sodium ions absorption, gastric acid secretion, and cAMP-induced jejunal chloride ions secretion. Allows the provision of potassium ions to the luminal membrane of the secretory canaliculus in the resting state as well as during stimulated acid secretion. When associated with KCNE2, forms a heterooligomer complex leading to currents with an apparently instantaneous activation, a rapid deactivation process and a linear current-voltage relationship and decreases the amplitude of the outward current. When associated with KCNE4, inhibits voltage-gated potassium channel activity. When associated with KCNE5, this complex only conducts current upon strong and continued depolarization. Also forms a heterotetramer with KCNQ5 that has a voltage-gated potassium channel activity. Binds with phosphatidylinositol 4,5-bisphosphate. KCNQ1-KCNE2 channel associates with Na(+)-coupled myo-inositol symporter in the apical membrane of choroid plexus epithelium and regulates the myo-inositol gradient between blood and cerebrospinal fluid with an impact on neuron excitability. The sequence is that of Potassium voltage-gated channel subfamily KQT member 1 from Rattus norvegicus (Rat).